A 642-amino-acid polypeptide reads, in one-letter code: Threonine--tRNA ligase (642 aa).

A TGS domain is found at 1–61; that stretch reads MPIITLPDGS…EEDASLEIIT (61 aa). The interval 244–535 is catalytic; the sequence is DHRKIGKQLD…LIEEYAGFFP (292 aa). The Zn(2+) site is built by C335, H386, and H512.

This sequence belongs to the class-II aminoacyl-tRNA synthetase family. As to quaternary structure, homodimer. It depends on Zn(2+) as a cofactor.

The protein resides in the cytoplasm. It carries out the reaction tRNA(Thr) + L-threonine + ATP = L-threonyl-tRNA(Thr) + AMP + diphosphate + H(+). Catalyzes the attachment of threonine to tRNA(Thr) in a two-step reaction: L-threonine is first activated by ATP to form Thr-AMP and then transferred to the acceptor end of tRNA(Thr). Also edits incorrectly charged L-seryl-tRNA(Thr). The polypeptide is Threonine--tRNA ligase (Vibrio vulnificus (strain YJ016)).